A 365-amino-acid chain; its full sequence is 2-aminoethylphosphonate--pyruvate transaminase (365 aa).

An N6-(pyridoxal phosphate)lysine modification is found at Lys-194.

The protein belongs to the class-V pyridoxal-phosphate-dependent aminotransferase family. PhnW subfamily. Homodimer. Pyridoxal 5'-phosphate serves as cofactor.

The catalysed reaction is (2-aminoethyl)phosphonate + pyruvate = phosphonoacetaldehyde + L-alanine. Its function is as follows. Involved in phosphonate degradation. In Bacillus cereus (strain ZK / E33L), this protein is 2-aminoethylphosphonate--pyruvate transaminase.